Consider the following 212-residue polypeptide: Leucyl/phenylalanyl-tRNA--protein transferase (212 aa).

It belongs to the L/F-transferase family.

It is found in the cytoplasm. The enzyme catalyses N-terminal L-lysyl-[protein] + L-leucyl-tRNA(Leu) = N-terminal L-leucyl-L-lysyl-[protein] + tRNA(Leu) + H(+). It carries out the reaction N-terminal L-arginyl-[protein] + L-leucyl-tRNA(Leu) = N-terminal L-leucyl-L-arginyl-[protein] + tRNA(Leu) + H(+). It catalyses the reaction L-phenylalanyl-tRNA(Phe) + an N-terminal L-alpha-aminoacyl-[protein] = an N-terminal L-phenylalanyl-L-alpha-aminoacyl-[protein] + tRNA(Phe). Functions in the N-end rule pathway of protein degradation where it conjugates Leu, Phe and, less efficiently, Met from aminoacyl-tRNAs to the N-termini of proteins containing an N-terminal arginine or lysine. The chain is Leucyl/phenylalanyl-tRNA--protein transferase from Paracoccus denitrificans (strain Pd 1222).